A 143-amino-acid chain; its full sequence is ATP synthase subunit b' (143 aa).

The chain crosses the membrane as a helical span at residues 6 to 26; the sequence is ATLPLMALQFLVLAVVLNAVF.

It belongs to the ATPase B chain family. In terms of assembly, F-type ATPases have 2 components, F(1) - the catalytic core - and F(0) - the membrane proton channel. F(1) has five subunits: alpha(3), beta(3), gamma(1), delta(1), epsilon(1). F(0) has four main subunits: a(1), b(1), b'(1) and c(10-14). The alpha and beta chains form an alternating ring which encloses part of the gamma chain. F(1) is attached to F(0) by a central stalk formed by the gamma and epsilon chains, while a peripheral stalk is formed by the delta, b and b' chains.

The protein resides in the cellular thylakoid membrane. Its function is as follows. F(1)F(0) ATP synthase produces ATP from ADP in the presence of a proton or sodium gradient. F-type ATPases consist of two structural domains, F(1) containing the extramembraneous catalytic core and F(0) containing the membrane proton channel, linked together by a central stalk and a peripheral stalk. During catalysis, ATP synthesis in the catalytic domain of F(1) is coupled via a rotary mechanism of the central stalk subunits to proton translocation. Component of the F(0) channel, it forms part of the peripheral stalk, linking F(1) to F(0). The b'-subunit is a diverged and duplicated form of b found in plants and photosynthetic bacteria. In Gloeothece citriformis (strain PCC 7424) (Cyanothece sp. (strain PCC 7424)), this protein is ATP synthase subunit b'.